The chain runs to 251 residues: 3-deoxy-manno-octulosonate cytidylyltransferase (251 aa).

It belongs to the KdsB family.

It is found in the cytoplasm. It catalyses the reaction 3-deoxy-alpha-D-manno-oct-2-ulosonate + CTP = CMP-3-deoxy-beta-D-manno-octulosonate + diphosphate. Its pathway is nucleotide-sugar biosynthesis; CMP-3-deoxy-D-manno-octulosonate biosynthesis; CMP-3-deoxy-D-manno-octulosonate from 3-deoxy-D-manno-octulosonate and CTP: step 1/1. The protein operates within bacterial outer membrane biogenesis; lipopolysaccharide biosynthesis. Its function is as follows. Activates KDO (a required 8-carbon sugar) for incorporation into bacterial lipopolysaccharide in Gram-negative bacteria. The polypeptide is 3-deoxy-manno-octulosonate cytidylyltransferase (Rhizobium leguminosarum bv. trifolii (strain WSM2304)).